The chain runs to 414 residues: UDP-N-acetylglucosamine 1-carboxyvinyltransferase (414 aa).

19–20 contributes to the phosphoenolpyruvate binding site; the sequence is KN. Arginine 89 serves as a coordination point for UDP-N-acetyl-alpha-D-glucosamine. The active-site Proton donor is the cysteine 113. Cysteine 113 is subject to 2-(S-cysteinyl)pyruvic acid O-phosphothioketal. Residues 118–122, aspartate 301, and valine 323 each bind UDP-N-acetyl-alpha-D-glucosamine; that span reads RPIDL.

Belongs to the EPSP synthase family. MurA subfamily.

It is found in the cytoplasm. It carries out the reaction phosphoenolpyruvate + UDP-N-acetyl-alpha-D-glucosamine = UDP-N-acetyl-3-O-(1-carboxyvinyl)-alpha-D-glucosamine + phosphate. It participates in cell wall biogenesis; peptidoglycan biosynthesis. In terms of biological role, cell wall formation. Adds enolpyruvyl to UDP-N-acetylglucosamine. This is UDP-N-acetylglucosamine 1-carboxyvinyltransferase from Bdellovibrio bacteriovorus (strain ATCC 15356 / DSM 50701 / NCIMB 9529 / HD100).